A 324-amino-acid chain; its full sequence is Beta-ketoacyl-[acyl-carrier-protein] synthase III (324 aa).

Active-site residues include cysteine 114 and histidine 246. The ACP-binding stretch occupies residues 247 to 251; the sequence is QANLR. The active site involves asparagine 276.

The protein belongs to the thiolase-like superfamily. FabH family. As to quaternary structure, homodimer.

The protein resides in the cytoplasm. It carries out the reaction malonyl-[ACP] + acetyl-CoA + H(+) = 3-oxobutanoyl-[ACP] + CO2 + CoA. It participates in lipid metabolism; fatty acid biosynthesis. Catalyzes the condensation reaction of fatty acid synthesis by the addition to an acyl acceptor of two carbons from malonyl-ACP. Catalyzes the first condensation reaction which initiates fatty acid synthesis and may therefore play a role in governing the total rate of fatty acid production. Possesses both acetoacetyl-ACP synthase and acetyl transacylase activities. Its substrate specificity determines the biosynthesis of branched-chain and/or straight-chain of fatty acids. The chain is Beta-ketoacyl-[acyl-carrier-protein] synthase III from Campylobacter jejuni (strain RM1221).